The chain runs to 503 residues: Nuclear respiratory factor 1 (503 aa).

A dimerization region spans residues 1-78 (MEEHGVTQTE…AHLAAAGPVG (78 aa)). The disordered stretch occupies residues 36–57 (SMLSADEDSPSSPEDTSYDDSD). 5 positions are modified to phosphoserine; by CK2: S39, S44, S46, S47, and S52. Positions 88–116 (GKKRKRPHVFESNPSIRKRQQTRLLRKLR) match the Nuclear localization signal motif. A DNA-binding region spans residues 109-305 (TRLLRKLRAT…SIAHLVPSQT (197 aa)). K139 is covalently cross-linked (Glycyl lysine isopeptide (Lys-Gly) (interchain with G-Cter in SUMO2)). The required for transcriptional activation stretch occupies residues 301 to 476 (VPSQTVVQTF…AQGNGPVQVA (176 aa)).

The protein belongs to the NRF1/Ewg family. Homodimer. Binds DNA as a dimer. Interacts with PPRC1. Phosphorylation enhances DNA binding. Ubiquitously expressed with strongest expression in skeletal muscle.

It localises to the nucleus. Transcription factor that activates the expression of the EIF2S1 (EIF2-alpha) gene. Links the transcriptional modulation of key metabolic genes to cellular growth and development. Implicated in the control of nuclear genes required for respiration, heme biosynthesis, and mitochondrial DNA transcription and replication. The protein is Nuclear respiratory factor 1 (NRF1) of Homo sapiens (Human).